The following is a 415-amino-acid chain: Gamma-glutamyl phosphate reductase (415 aa).

This sequence belongs to the gamma-glutamyl phosphate reductase family.

The protein resides in the cytoplasm. The enzyme catalyses L-glutamate 5-semialdehyde + phosphate + NADP(+) = L-glutamyl 5-phosphate + NADPH + H(+). It participates in amino-acid biosynthesis; L-proline biosynthesis; L-glutamate 5-semialdehyde from L-glutamate: step 2/2. Its function is as follows. Catalyzes the NADPH-dependent reduction of L-glutamate 5-phosphate into L-glutamate 5-semialdehyde and phosphate. The product spontaneously undergoes cyclization to form 1-pyrroline-5-carboxylate. This chain is Gamma-glutamyl phosphate reductase, found in Mycolicibacterium gilvum (strain PYR-GCK) (Mycobacterium gilvum (strain PYR-GCK)).